The primary structure comprises 73 residues: UPF0057 membrane protein At4g30650 (73 aa).

2 helical membrane passes run 4-24 (NMEV…GVCL) and 37-57 (LVLT…VIVF).

Belongs to the UPF0057 (PMP3) family.

It localises to the membrane. The sequence is that of UPF0057 membrane protein At4g30650 from Arabidopsis thaliana (Mouse-ear cress).